The sequence spans 376 residues: Ribosomal RNA large subunit methyltransferase G (376 aa).

It belongs to the methyltransferase superfamily. RlmG family.

The protein resides in the cytoplasm. The catalysed reaction is guanosine(1835) in 23S rRNA + S-adenosyl-L-methionine = N(2)-methylguanosine(1835) in 23S rRNA + S-adenosyl-L-homocysteine + H(+). Its function is as follows. Specifically methylates the guanine in position 1835 (m2G1835) of 23S rRNA. This Klebsiella pneumoniae (strain 342) protein is Ribosomal RNA large subunit methyltransferase G.